Consider the following 775-residue polypeptide: MTLTPMEDKGIIPNFNDFKRQLAELLQSRSTVEDITLLQGFLQLVHSKTQQWRGAEGLPATPDLLDAVWKEIHYPIFKWFQQWRAHLLEAAEGGPQERTYISFRRMNGKLNKIFKIIRQFYNGLVQQLFDRYDFGKLLPAGVIRELNVQSGGELQTLDDSSYFTILCVMSLQRCLLYLGCCHRYKCCCSKLSKRFHISDFDDSMRYFMLAKQIVPSVGETYLQEGLVYVQTGNYGHAAYAFMRGSLSRMPTDAGIPNLESIVADASSGLFAKHQGILKRLRSKESDSNKLINREVLEFYFLALFSSVYAPESWSKQGSDIRHCTEILFEKVRSRYARNVRLILQDVLLFIGGFDLVIKKAKAMGLNRSDTLPSNCTAFLETAFDFFSHVIDSVVLKEWQSFDTWEYLALVRVICVWIKSHSIVTQFAHRHTQFCQSVAHLLNNILAHTEYQQLMDVEHRPKRDYFFQEDIMLKDFSAIGHTLSDFNDVDLFQMENLPDRLAGLVDDKLTAKEEGLLKLHAIVFIGKKFLANNDVNIVWCDESKRFNSLKPDVPLRTCSPPKAKTPPPSTSDYTPAGAKQTKKSKPKRNSRRVQSLSSLEAKLMERKGLRQSVAEGRVYSGCSVPAAPMSFDVAPSAHLYQDRAAGTSATQEAATYYNQGYNGPMQLGSTEILNSRSPSGNNRIAFHPSHQAYMQMIQTPQPQAWPTAYGHNAYYSQPTQHPYPMSSQLAQFQNGPIPFVAGPYAMYMPPPGPGMVVLNNGHPMIPNESPPQQHYP.

A disordered region spans residues 550-597 (PDVPLRTCSPPKAKTPPPSTSDYTPAGAKQTKKSKPKRNSRRVQSLSS). Residues 579–590 (QTKKSKPKRNSR) are compositionally biased toward basic residues.

This sequence belongs to the EST1 family.

Its subcellular location is the nucleus. It is found in the chromosome. The protein localises to the telomere. In terms of biological role, involved in telomere maintenance. This is Protein EBS1 (EBS1) from Eremothecium gossypii (strain ATCC 10895 / CBS 109.51 / FGSC 9923 / NRRL Y-1056) (Yeast).